We begin with the raw amino-acid sequence, 504 residues long: Histidine--tRNA ligase (504 aa).

The protein belongs to the class-II aminoacyl-tRNA synthetase family. As to quaternary structure, homodimer.

The protein localises to the cytoplasm. The enzyme catalyses tRNA(His) + L-histidine + ATP = L-histidyl-tRNA(His) + AMP + diphosphate + H(+). In Rhizobium rhizogenes (strain K84 / ATCC BAA-868) (Agrobacterium radiobacter), this protein is Histidine--tRNA ligase.